The following is an 857-amino-acid chain: Cation/H(+) antiporter 25 (857 aa).

The next 11 membrane-spanning stretches (helical) occupy residues 65-85 (FSTF…VYVL), 93-110 (RIVC…SMLG), 122-142 (PIAN…FFFL), 161-181 (YIAA…GAAL), 194-214 (SIGG…YTVL), 227-247 (FAMS…VLFE), 259-279 (YSVI…LLVV), 313-333 (FLTD…GLVV), 385-405 (IYMS…AALF), 413-435 (SLTL…LHWI), and 447-467 (VMVL…SFLY). Position 855 is a phosphoserine (Ser855).

This sequence belongs to the monovalent cation:proton antiporter 2 (CPA2) transporter (TC 2.A.37) family. CHX (TC 2.A.37.4) subfamily. In terms of tissue distribution, specifically expressed in pollen.

It is found in the membrane. Its function is as follows. May operate as a cation/H(+) antiporter. The chain is Cation/H(+) antiporter 25 (CHX25) from Arabidopsis thaliana (Mouse-ear cress).